A 484-amino-acid chain; its full sequence is Aspartyl/glutamyl-tRNA(Asn/Gln) amidotransferase subunit B (484 aa).

This sequence belongs to the GatB/GatE family. GatB subfamily. In terms of assembly, heterotrimer of A, B and C subunits.

The enzyme catalyses L-glutamyl-tRNA(Gln) + L-glutamine + ATP + H2O = L-glutaminyl-tRNA(Gln) + L-glutamate + ADP + phosphate + H(+). The catalysed reaction is L-aspartyl-tRNA(Asn) + L-glutamine + ATP + H2O = L-asparaginyl-tRNA(Asn) + L-glutamate + ADP + phosphate + 2 H(+). Functionally, allows the formation of correctly charged Asn-tRNA(Asn) or Gln-tRNA(Gln) through the transamidation of misacylated Asp-tRNA(Asn) or Glu-tRNA(Gln) in organisms which lack either or both of asparaginyl-tRNA or glutaminyl-tRNA synthetases. The reaction takes place in the presence of glutamine and ATP through an activated phospho-Asp-tRNA(Asn) or phospho-Glu-tRNA(Gln). This is Aspartyl/glutamyl-tRNA(Asn/Gln) amidotransferase subunit B from Anaeromyxobacter sp. (strain K).